The primary structure comprises 374 residues: Lipoyl synthase, mitochondrial (374 aa).

A mitochondrion-targeting transit peptide spans 1-19; it reads MHSRSALLYRFLRPASRCF. Positions 103, 108, 114, 134, 138, 141, and 350 each coordinate [4Fe-4S] cluster. Residues 119–339 enclose the Radical SAM core domain; sequence ETGTATATIM…RLLGMEMGFR (221 aa).

Belongs to the radical SAM superfamily. Lipoyl synthase family. It depends on [4Fe-4S] cluster as a cofactor. In terms of tissue distribution, expressed in leaves and flowers, but not in roots. Expressed in roots, rosette leaves, cauline leaves, stems, flowers and siliques.

Its subcellular location is the mitochondrion. It catalyses the reaction [[Fe-S] cluster scaffold protein carrying a second [4Fe-4S](2+) cluster] + N(6)-octanoyl-L-lysyl-[protein] + 2 oxidized [2Fe-2S]-[ferredoxin] + 2 S-adenosyl-L-methionine + 4 H(+) = [[Fe-S] cluster scaffold protein] + N(6)-[(R)-dihydrolipoyl]-L-lysyl-[protein] + 4 Fe(3+) + 2 hydrogen sulfide + 2 5'-deoxyadenosine + 2 L-methionine + 2 reduced [2Fe-2S]-[ferredoxin]. The protein operates within protein modification; protein lipoylation via endogenous pathway; protein N(6)-(lipoyl)lysine from octanoyl-[acyl-carrier-protein]: step 2/2. Its function is as follows. Catalyzes the radical-mediated insertion of two sulfur atoms into the C-6 and C-8 positions of the octanoyl moiety bound to the lipoyl domains of lipoate-dependent enzymes, thereby converting the octanoylated domains into lipoylated derivatives. Together with LIP2 is essential for mitochondrial protein lipoylation during seed development. Required for the lipoylation of mitochondrial pyruvate dehydrogenase component E2 proteins in leaves and roots. The chain is Lipoyl synthase, mitochondrial from Arabidopsis thaliana (Mouse-ear cress).